Consider the following 199-residue polypeptide: TATA-box-binding protein (199 aa).

Tandem repeats lie at residues 10 to 86 (IENI…VKLL) and 101 to 177 (VQNI…YNQL).

This sequence belongs to the TBP family.

Functionally, general factor that plays a role in the activation of archaeal genes transcribed by RNA polymerase. Binds specifically to the TATA box promoter element which lies close to the position of transcription initiation. In Pyrobaculum islandicum (strain DSM 4184 / JCM 9189 / GEO3), this protein is TATA-box-binding protein.